The chain runs to 353 residues: Outer membrane protein P5 (353 aa).

Positions 1–21 (MKKTAIALVVAGLAAASVAQA) are cleaved as a signal peptide. A run of 8 beta stranded transmembrane segments spans residues 27–37 (TFYAGVKAGQA), 58–69 (SFTYGVFGGYQI), 77–85 (LAVELGYDD), 104–115 (HGTHLSLKGSYE), 120–128 (LDVYGKAGV), 158–167 (GLFAVGAEYA), 172–179 (LAVRLEYQ), and 205–213 (SINAGISYR). The OmpA-like domain occupies 227–353 (VVSKTFSLNS…RVEIAVNGTK (127 aa)). Cysteine 326 and cysteine 338 are joined by a disulfide.

Belongs to the outer membrane OOP (TC 1.B.6) superfamily. OmpA family. In terms of assembly, monomer and homodimer.

Its subcellular location is the cell outer membrane. Its function is as follows. With TolR probably plays a role in maintaining the position of the peptidoglycan cell wall in the periplasm. Acts as a porin with low permeability that allows slow penetration of small solutes; an internal gate slows down solute passage. In terms of biological role, reconstitution in planar bilayers with lithium dodecyl sulfate-solublized P5 yields narrow pores (58 pS conductance) with a low probability of opening, whereas n-octyl-bD-glucopyranoside-solubilized P5 forms large pores (1.1 nS conductance) with high open probability. The large pore easily converts to the smaller pore at room temperature; at 42 degrees Celsius the smaller pore converts to the larger one. The protein is Outer membrane protein P5 of Haemophilus influenzae (strain ATCC 51907 / DSM 11121 / KW20 / Rd).